A 2179-amino-acid polypeptide reads, in one-letter code: Genome polyprotein (2179 aa).

The Cell attachment site motif lies at 763 to 765 (RGD). In terms of domain architecture, LRAT spans 786–881 (LAYLDRGFYK…IFGSHSLSQH (96 aa)). Catalysis depends on His796, which acts as the For protein 2A H-NC. Cys865 (for protein 2A H-NC; Acyl-thioester intermediate) is an active-site residue. The SF3 helicase domain occupies 1156-1317 (FQELARIPNR…KHYSKSGKLN (162 aa)). 1184–1191 (GEPGQGKS) provides a ligand contact to ATP. Tyr1493 carries the post-translational modification O-(5'-phospho-RNA)-tyrosine. Residues 1517–1707 (APYDGQLEHI…IPFNFLKNDM (191 aa)) form the Peptidase C3 domain. Catalysis depends on for protease 3C activity residues His1557, Asp1595, and Cys1669. Residue Cys1896 is the Acyl-thioester intermediate of the active site. A RdRp catalytic domain is found at 1944–2058 (DYNYEMDYSQ…SLDKEIEPER (115 aa)). Residues Asp1950 and Asp2044 each contribute to the Mg(2+) site.

The protein belongs to the picornaviruses polyprotein family. Interacts with capsid protein VP1 and capsid protein VP3 to form heterotrimeric protomers. Five protomers subsequently associate to form pentamers which serve as building blocks for the capsid. In terms of assembly, interacts with capsid protein VP0, and capsid protein VP3 to form heterotrimeric protomers. Five protomers subsequently associate to form pentamers which serve as building blocks for the capsid. As to quaternary structure, interacts with capsid protein VP0 and capsid protein VP1 to form heterotrimeric protomers. Five protomers subsequently associate to form pentamers which serve as building blocks for the capsid. Homohexamer; forms a hexameric ring structure with 6-fold symmetry characteristic of AAA+ ATPases. In terms of assembly, homodimer. Interacts with host ACBD3. As to quaternary structure, interacts with RNA-directed RNA polymerase. Interacts with Viral protein genome-linked. It depends on Mg(2+) as a cofactor. In terms of processing, VPg is uridylylated by the polymerase and is covalently linked to the 5'-end of genomic RNA. This uridylylated form acts as a nucleotide-peptide primer for the polymerase. Specific enzymatic cleavages yield mature proteins. All cleavages are catalyzed by P3C.

It is found in the virion. The protein localises to the host cytoplasm. The protein resides in the host nucleus. It localises to the host nucleolus. Its subcellular location is the host cytoplasmic vesicle membrane. The catalysed reaction is RNA(n) + a ribonucleoside 5'-triphosphate = RNA(n+1) + diphosphate. It carries out the reaction a ribonucleoside 5'-triphosphate + H2O = a ribonucleoside 5'-diphosphate + phosphate + H(+). It catalyses the reaction Selective cleavage of Gln-|-Gly bond in the poliovirus polyprotein. In other picornavirus reactions Glu may be substituted for Gln, and Ser or Thr for Gly.. Forms an icosahedral capsid of pseudo T=3 symmetry together with capsid proteins VP1 and VP3. The capsid is 300 Angstroms in diameter, composed of 60 copies of each capsid protein and enclosing the viral positive strand RNA genome. Capsid proteins interact with host alpha-V/beta-3 integrin heterodimer to provide virion attachment target cell. This attachment induces virion internalization predominantly through clathrin-mediated endocytosis. Binds packaging signals present in the viral RNA. Functionally, forms an icosahedral capsid of pseudo T=3 symmetry together with capsid proteins VP0 and VP1. The capsid is 300 Angstroms in diameter, composed of 60 copies of each capsid protein and enclosing the viral positive strand RNA genome. Capsid proteins interact with host alpha-V/beta-3 integrin heterodimer to provide virion attachment target cell. This attachment induces virion internalization predominantly through clathrin-mediated endocytosis. Binds packaging signals present in the viral RNA. Its function is as follows. Forms an icosahedral capsid of pseudo T=3 symmetry together with capsid proteins VP0 and VP3. The capsid is 300 Angstroms in diameter, composed of 60 copies of each capsid protein and enclosing the viral positive strand RNA genome. Capsid proteins interact with host alpha-V/beta-3 integrin heterodimer to provide virion attachment target cell. This attachment induces virion internalization predominantly through clathrin-mediated endocytosis. Binds packaging signals present in the viral RNA. In terms of biological role, is not a protease. Plays an essential role in the virus replication cycle by acting as a viroporin. Creates a pore in the host endoplasmic reticulum and as a consequence releases Ca2+ in the cytoplasm of infected cell. In turn, high levels of cytoplasmic calcium may trigger membrane trafficking and transport of viral ER-associated proteins to viroplasms, sites of viral genome replication. Functionally, induces and associates with structural rearrangements of intracellular membranes. Displays RNA-binding, nucleotide binding and NTPase activities. May play a role in virion morphogenesis and viral RNA encapsidation by interacting with the capsid protein VP3. Its function is as follows. Localizes the viral replication complex to the surface of membranous vesicles. It inhibits host cell endoplasmic reticulum-to-Golgi apparatus transport and causes the disassembly of the Golgi complex, possibly through GBF1 interaction. This would result in depletion of MHC, trail receptors and IFN receptors at the host cell surface. Plays an essential role in viral RNA replication by recruiting ACBD3 and PI4KB at the viral replication sites, thereby allowing the formation of the rearranged membranous structures where viral replication takes place. In terms of biological role, acts as a primer for viral RNA replication and remains covalently bound to viral genomic RNA. VPg is uridylylated prior to priming replication into VPg-pUpU. The VPg-pUpU is then used as primer on the genomic RNA poly(A) by the RNA-dependent RNA polymerase to replicate the viral genome. Following genome release from the infecting virion in the cytoplasm, the VPg-RNA linkage is probably removed by host TDP2. During the late stage of the replication cycle, host TDP2 is excluded from sites of viral RNA synthesis and encapsidation, allowing for the generation of progeny virions. Cysteine protease that generates mature viral proteins from the precursor polyprotein. In addition to its proteolytic activity, it binds to viral RNA, and thus influences viral genome replication. RNA and substrate bind cooperatively to the protease. Functionally, replicates the viral genomic RNA on the surface of intracellular membranes. Covalently attaches UMP to a tyrosine of VPg, which is used to prime RNA synthesis. The positive stranded RNA genome is first replicated at virus induced membranous vesicles, creating a dsRNA genomic replication form. This dsRNA is then used as template to synthesize positive stranded RNA genomes. ss(+)RNA genomes are either translated, replicated or encapsidated. The protein is Genome polyprotein of Human parechovirus 2 (strain Williamson) (HPeV-2).